A 489-amino-acid polypeptide reads, in one-letter code: Rhamnulokinase (489 aa).

13–17 (ASSGR) is a binding site for ATP. Cysteines 68 and 222 form a disulfide. Residues G83 and 236–238 (HDT) contribute to the substrate site. Catalysis depends on D237, which acts as the Proton acceptor. Residue T259 participates in ATP binding. N296 is a substrate binding site. Q304 is an ATP binding site. Residues C353 and C370 are joined by a disulfide bond. G402 is a binding site for ATP. C413 and C417 form a disulfide bridge.

It belongs to the rhamnulokinase family. The cofactor is Mg(2+).

The enzyme catalyses L-rhamnulose + ATP = L-rhamnulose 1-phosphate + ADP + H(+). The protein operates within carbohydrate degradation; L-rhamnose degradation; glycerone phosphate from L-rhamnose: step 2/3. Functionally, involved in the catabolism of L-rhamnose (6-deoxy-L-mannose). Catalyzes the transfer of the gamma-phosphate group from ATP to the 1-hydroxyl group of L-rhamnulose to yield L-rhamnulose 1-phosphate. The sequence is that of Rhamnulokinase from Salmonella paratyphi B (strain ATCC BAA-1250 / SPB7).